A 1058-amino-acid polypeptide reads, in one-letter code: Carbamoyl phosphate synthase large chain (1058 aa).

A carboxyphosphate synthetic domain region spans residues 1 to 401 (MPKRKDIQKI…SLLKACRSLE (401 aa)). 12 residues coordinate ATP: Arg129, Arg169, Gly175, Gly176, Arg208, Ile210, Glu215, Gly241, Ile242, His243, Gln284, and Glu298. Positions 133 to 327 (KQLMQELDQP…IAKLAAKIAV (195 aa)) constitute an ATP-grasp 1 domain. Gln284, Glu298, and Asn300 together coordinate Mg(2+). The Mn(2+) site is built by Gln284, Glu298, and Asn300. Residues 402-546 (IGVCHNEMTS…YSTYELENES (145 aa)) are oligomerization domain. Residues 547–929 (VQSNKESILV…ALYKAFEANN (383 aa)) form a carbamoyl phosphate synthetic domain region. The ATP-grasp 2 domain occupies 671 to 861 (EKALKELGIP…MAQIATKLIL (191 aa)). Arg707, Ser746, Ile748, Glu752, Gly777, Val778, His779, Ser780, Gln820, and Glu832 together coordinate ATP. Mg(2+) is bound by residues Gln820, Glu832, and Asn834. Residues Gln820, Glu832, and Asn834 each contribute to the Mn(2+) site. An MGS-like domain is found at 930–1058 (SHLSEFGQIV…ESRCFNIEAI (129 aa)). Residues 930–1058 (SHLSEFGQIV…ESRCFNIEAI (129 aa)) are allosteric domain.

This sequence belongs to the CarB family. As to quaternary structure, composed of two chains; the small (or glutamine) chain promotes the hydrolysis of glutamine to ammonia, which is used by the large (or ammonia) chain to synthesize carbamoyl phosphate. Tetramer of heterodimers (alpha,beta)4. Mg(2+) is required as a cofactor. It depends on Mn(2+) as a cofactor.

It catalyses the reaction hydrogencarbonate + L-glutamine + 2 ATP + H2O = carbamoyl phosphate + L-glutamate + 2 ADP + phosphate + 2 H(+). The enzyme catalyses hydrogencarbonate + NH4(+) + 2 ATP = carbamoyl phosphate + 2 ADP + phosphate + 2 H(+). It functions in the pathway amino-acid biosynthesis; L-arginine biosynthesis; carbamoyl phosphate from bicarbonate: step 1/1. It participates in pyrimidine metabolism; UMP biosynthesis via de novo pathway; (S)-dihydroorotate from bicarbonate: step 1/3. Its function is as follows. Large subunit of the glutamine-dependent carbamoyl phosphate synthetase (CPSase). CPSase catalyzes the formation of carbamoyl phosphate from the ammonia moiety of glutamine, carbonate, and phosphate donated by ATP, constituting the first step of 2 biosynthetic pathways, one leading to arginine and/or urea and the other to pyrimidine nucleotides. The large subunit (synthetase) binds the substrates ammonia (free or transferred from glutamine from the small subunit), hydrogencarbonate and ATP and carries out an ATP-coupled ligase reaction, activating hydrogencarbonate by forming carboxy phosphate which reacts with ammonia to form carbamoyl phosphate. This is Carbamoyl phosphate synthase large chain from Streptococcus pyogenes serotype M6 (strain ATCC BAA-946 / MGAS10394).